The following is a 445-amino-acid chain: Hydroxymethylglutaryl-CoA synthase (445 aa).

Residue Asp31 participates in (3S)-3-hydroxy-3-methylglutaryl-CoA binding. The active-site Proton donor/acceptor is the Glu83. Residues Cys120, Thr163, Ser211, His244, Lys253, Asn328, and Ser364 each contribute to the (3S)-3-hydroxy-3-methylglutaryl-CoA site. Cys120 serves as the catalytic Acyl-thioester intermediate. Residue His244 is the Proton donor/acceptor of the active site.

The protein belongs to the thiolase-like superfamily. HMG-CoA synthase family.

It carries out the reaction acetoacetyl-CoA + acetyl-CoA + H2O = (3S)-3-hydroxy-3-methylglutaryl-CoA + CoA + H(+). It functions in the pathway metabolic intermediate biosynthesis; (R)-mevalonate biosynthesis; (R)-mevalonate from acetyl-CoA: step 2/3. In contrast to bacterial and eukaryotic HMG-CoA synthases, is insensitive to feedback substrate inhibition by acetoacetyl-CoA. Enzymatic activity is inhibited by hymeglusin, which also blocks the propagation of H.volcanii cells in vivo, indicating the critical role that the mevalonate pathway plays in isoprenoid biosynthesis by these archaea. Catalyzes the condensation of acetyl-CoA with acetoacetyl-CoA to form 3-hydroxy-3-methylglutaryl-CoA (HMG-CoA). Functions in the mevalonate (MVA) pathway leading to isopentenyl diphosphate (IPP), a key precursor for the biosynthesis of isoprenoid compounds such as archaeal membrane lipids. In Haloferax volcanii (strain ATCC 29605 / DSM 3757 / JCM 8879 / NBRC 14742 / NCIMB 2012 / VKM B-1768 / DS2) (Halobacterium volcanii), this protein is Hydroxymethylglutaryl-CoA synthase (hmgB).